Here is a 98-residue protein sequence, read N- to C-terminus: Large ribosomal subunit protein uL23 (98 aa).

This sequence belongs to the universal ribosomal protein uL23 family. In terms of assembly, part of the 50S ribosomal subunit. Contacts protein L29, and trigger factor when it is bound to the ribosome.

One of the early assembly proteins it binds 23S rRNA. One of the proteins that surrounds the polypeptide exit tunnel on the outside of the ribosome. Forms the main docking site for trigger factor binding to the ribosome. This chain is Large ribosomal subunit protein uL23, found in Bordetella avium (strain 197N).